Reading from the N-terminus, the 206-residue chain is Glycerol-3-phosphate acyltransferase (206 aa).

The next 6 membrane-spanning stretches (helical) occupy residues 4–24 (TAFA…AVIV), 53–73 (LAAA…VALA), 86–106 (GIAL…FFGF), 116–136 (VGIL…TWLF), 137–157 (MAFV…LAPV), and 160–180 (FFIL…AIVV).

Belongs to the PlsY family. Probably interacts with PlsX.

It is found in the cell inner membrane. It carries out the reaction an acyl phosphate + sn-glycerol 3-phosphate = a 1-acyl-sn-glycero-3-phosphate + phosphate. The protein operates within lipid metabolism; phospholipid metabolism. Catalyzes the transfer of an acyl group from acyl-phosphate (acyl-PO(4)) to glycerol-3-phosphate (G3P) to form lysophosphatidic acid (LPA). This enzyme utilizes acyl-phosphate as fatty acyl donor, but not acyl-CoA or acyl-ACP. This is Glycerol-3-phosphate acyltransferase from Chromobacterium violaceum (strain ATCC 12472 / DSM 30191 / JCM 1249 / CCUG 213 / NBRC 12614 / NCIMB 9131 / NCTC 9757 / MK).